The sequence spans 116 residues: Somatostatin (116 aa).

Residues 1–24 (MLSCRLQCALALLSIALAVGTVSA) form the signal peptide. A propeptide spanning residues 25-88 (APSDPRLRQF…QDEVRLELER (64 aa)) is cleaved from the precursor. The interval 60-82 (PSQTENEALESEDLSRGAEQDEV) is disordered. The span at 72–82 (DLSRGAEQDEV) shows a compositional bias: basic and acidic residues. C105 and C116 are disulfide-bonded.

It belongs to the somatostatin family.

It is found in the secreted. Somatostatin inhibits the release of somatotropin. This chain is Somatostatin (SST), found in Gallus gallus (Chicken).